The sequence spans 207 residues: Protein FMP32, mitochondrial (207 aa).

Residues 100–136 adopt a coiled-coil conformation; the sequence is ADRSEFHNIQNEYESVKNDLEKLRNKLREEITKTNAG. A helical transmembrane segment spans residues 184 to 206; the sequence is VMQWLIGVCTGTFALVLAYMRLL.

This sequence belongs to the CCDC90 family.

Its subcellular location is the mitochondrion. It localises to the membrane. The sequence is that of Protein FMP32, mitochondrial (FMP32) from Saccharomyces cerevisiae (strain ATCC 204508 / S288c) (Baker's yeast).